The sequence spans 134 residues: Terepressin/terephysin (134 aa).

An N-terminal signal peptide occupies residues methionine 1–glycine 33. The cysteines at positions 34 and 39 are disulfide-linked. Positions lysine 44–valine 50 are excised as a propeptide. Disulfide bonds link cysteine 56–cysteine 100, cysteine 59–cysteine 73, cysteine 67–cysteine 90, cysteine 74–cysteine 80, cysteine 107–cysteine 121, cysteine 115–cysteine 133, and cysteine 122–cysteine 127.

It belongs to the vasopressin/oxytocin family. Post-translationally, contains 7 disulfide bonds. Expressed by the venom duct.

Its subcellular location is the secreted. The protein is Terepressin/terephysin of Terebra subulata (Chocolate spotted auger).